The primary structure comprises 387 residues: 1-deoxy-D-xylulose 5-phosphate reductoisomerase (387 aa).

Residues Thr-11, Gly-12, Ser-13, Ile-14, Gly-37, Arg-38, Gln-39, and Asn-127 each coordinate NADPH. Lys-128 contacts 1-deoxy-D-xylulose 5-phosphate. Glu-129 provides a ligand contact to NADPH. Asp-153 is a binding site for Mn(2+). Positions 154, 155, 179, and 200 each coordinate 1-deoxy-D-xylulose 5-phosphate. A Mn(2+)-binding site is contributed by Glu-155. An NADPH-binding site is contributed by Gly-206. Residues Ser-213, Asn-218, Lys-219, and Glu-222 each contribute to the 1-deoxy-D-xylulose 5-phosphate site. A Mn(2+)-binding site is contributed by Glu-222.

It belongs to the DXR family. Mg(2+) serves as cofactor. Mn(2+) is required as a cofactor.

The catalysed reaction is 2-C-methyl-D-erythritol 4-phosphate + NADP(+) = 1-deoxy-D-xylulose 5-phosphate + NADPH + H(+). The protein operates within isoprenoid biosynthesis; isopentenyl diphosphate biosynthesis via DXP pathway; isopentenyl diphosphate from 1-deoxy-D-xylulose 5-phosphate: step 1/6. Catalyzes the NADPH-dependent rearrangement and reduction of 1-deoxy-D-xylulose-5-phosphate (DXP) to 2-C-methyl-D-erythritol 4-phosphate (MEP). The protein is 1-deoxy-D-xylulose 5-phosphate reductoisomerase of Symbiobacterium thermophilum (strain DSM 24528 / JCM 14929 / IAM 14863 / T).